The primary structure comprises 395 residues: Elongation factor Tu (395 aa).

The tr-type G domain occupies 10–204 (KPHVNIGTIG…AIDNWIPLPQ (195 aa)). Positions 19 to 26 (GHVDHGKT) are G1. 19 to 26 (GHVDHGKT) is a GTP binding site. Threonine 26 contacts Mg(2+). The segment at 60-64 (GITIN) is G2. The tract at residues 81 to 84 (DCPG) is G3. GTP is bound by residues 81 to 85 (DCPGH) and 136 to 139 (NKVD). Positions 136–139 (NKVD) are G4. The interval 174–176 (SAL) is G5.

This sequence belongs to the TRAFAC class translation factor GTPase superfamily. Classic translation factor GTPase family. EF-Tu/EF-1A subfamily. Monomer.

Its subcellular location is the cytoplasm. The catalysed reaction is GTP + H2O = GDP + phosphate + H(+). In terms of biological role, GTP hydrolase that promotes the GTP-dependent binding of aminoacyl-tRNA to the A-site of ribosomes during protein biosynthesis. This chain is Elongation factor Tu, found in Azobacteroides pseudotrichonymphae genomovar. CFP2.